The chain runs to 559 residues: Formate--tetrahydrofolate ligase (559 aa).

68-75 (TPAGEGKT) serves as a coordination point for ATP.

The protein belongs to the formate--tetrahydrofolate ligase family.

It catalyses the reaction (6S)-5,6,7,8-tetrahydrofolate + formate + ATP = (6R)-10-formyltetrahydrofolate + ADP + phosphate. It functions in the pathway one-carbon metabolism; tetrahydrofolate interconversion. The chain is Formate--tetrahydrofolate ligase from Moorella thermoacetica (strain ATCC 39073 / JCM 9320).